We begin with the raw amino-acid sequence, 547 residues long: MSSLTQLPQWQALQTHLEENRSVQMRDLFDQDSQRFSRFSLQQGELLFDYSKNRITAETMARLLDLARAQDVEGWRDRMFAGEAINETEGRAVLHVALRNRSGRPIRVAGEDVMPAINQVLQQMRQFSEAVRSGAWKGQSGQAITDVVNIGIGGSDLGPVMVCEALKPYHQPGLSVHFVSNVDGTHMAETLKGLNAETTLFIVASKTFTTQETLTNAHTARDWLVAQLGEAAVRKHFVALSTNAEAVSAFGIDTDNMFAFWNWVGGRYSLWSAIGLPIAIAVGFEGFMALHDGAYAMDEHFRTAPLASNMPVIKALIGIWNHNFLGAESFAVLPYDQYLHRLAAYLQQADMESNGKYVTRDGARVDYTTGPVLFGEPGTNGQHSFYQLIHQSTRLVPADFIAAAHTHNPVGDHHAKLLSNFFAQTEALMTGKTAAQVRQELEAAGLHGAALEALVPHKVFDGNRPTNSILVRQFTPYTLGQLIALYEHTIHVQGMVWGINPYDQWGVELGKQLAKKILPELTTPGEVHSHDGSTNGLINHYKAWLAE.

The Proton donor role is filled by glutamate 352. Residues histidine 383 and lysine 511 contribute to the active site.

This sequence belongs to the GPI family.

Its subcellular location is the cytoplasm. The catalysed reaction is alpha-D-glucose 6-phosphate = beta-D-fructose 6-phosphate. It participates in carbohydrate biosynthesis; gluconeogenesis. It functions in the pathway carbohydrate degradation; glycolysis; D-glyceraldehyde 3-phosphate and glycerone phosphate from D-glucose: step 2/4. Its function is as follows. Catalyzes the reversible isomerization of glucose-6-phosphate to fructose-6-phosphate. The sequence is that of Glucose-6-phosphate isomerase from Magnetococcus marinus (strain ATCC BAA-1437 / JCM 17883 / MC-1).